A 469-amino-acid chain; its full sequence is UDP-N-acetylmuramate--L-alanine ligase (469 aa).

122–128 (GTHGKTT) lines the ATP pocket.

The protein belongs to the MurCDEF family.

Its subcellular location is the cytoplasm. It carries out the reaction UDP-N-acetyl-alpha-D-muramate + L-alanine + ATP = UDP-N-acetyl-alpha-D-muramoyl-L-alanine + ADP + phosphate + H(+). It participates in cell wall biogenesis; peptidoglycan biosynthesis. Functionally, cell wall formation. The sequence is that of UDP-N-acetylmuramate--L-alanine ligase from Legionella pneumophila (strain Paris).